A 141-amino-acid polypeptide reads, in one-letter code: Endoribonuclease YbeY (141 aa).

Zn(2+) is bound by residues His107, His111, and Asp117.

It belongs to the endoribonuclease YbeY family. Requires Zn(2+) as cofactor.

The protein resides in the cytoplasm. Its function is as follows. Single strand-specific metallo-endoribonuclease involved in late-stage 70S ribosome quality control and in maturation of the 3' terminus of the 16S rRNA. In Endomicrobium trichonymphae, this protein is Endoribonuclease YbeY.